Consider the following 498-residue polypeptide: Lysine--tRNA ligase (498 aa).

2 residues coordinate Mg(2+): Glu407 and Glu414.

It belongs to the class-II aminoacyl-tRNA synthetase family. Homodimer. Requires Mg(2+) as cofactor.

Its subcellular location is the cytoplasm. It catalyses the reaction tRNA(Lys) + L-lysine + ATP = L-lysyl-tRNA(Lys) + AMP + diphosphate. The chain is Lysine--tRNA ligase from Sinorhizobium medicae (strain WSM419) (Ensifer medicae).